Here is a 546-residue protein sequence, read N- to C-terminus: Probable protein kinase UbiB (546 aa).

One can recognise a Protein kinase domain in the interval 124 to 502 (DFEIKPLASA…HVRQGQSRYF (379 aa)). ATP contacts are provided by residues 130–138 (LASASIAQV) and Lys-153. Asp-288 (proton acceptor) is an active-site residue. The next 2 helical transmembrane spans lie at 501-521 (YFLG…VSRP) and 522-542 (EWGL…FVGW).

This sequence belongs to the ABC1 family. UbiB subfamily.

It is found in the cell inner membrane. It participates in cofactor biosynthesis; ubiquinone biosynthesis [regulation]. Is probably a protein kinase regulator of UbiI activity which is involved in aerobic coenzyme Q (ubiquinone) biosynthesis. In Shigella sonnei (strain Ss046), this protein is Probable protein kinase UbiB.